A 255-amino-acid polypeptide reads, in one-letter code: Phosphoribosylaminoimidazole-succinocarboxamide synthase A (255 aa).

It belongs to the SAICAR synthetase family.

It carries out the reaction 5-amino-1-(5-phospho-D-ribosyl)imidazole-4-carboxylate + L-aspartate + ATP = (2S)-2-[5-amino-1-(5-phospho-beta-D-ribosyl)imidazole-4-carboxamido]succinate + ADP + phosphate + 2 H(+). It functions in the pathway purine metabolism; IMP biosynthesis via de novo pathway; 5-amino-1-(5-phospho-D-ribosyl)imidazole-4-carboxamide from 5-amino-1-(5-phospho-D-ribosyl)imidazole-4-carboxylate: step 1/2. The protein is Phosphoribosylaminoimidazole-succinocarboxamide synthase A (purC1) of Bradyrhizobium diazoefficiens (strain JCM 10833 / BCRC 13528 / IAM 13628 / NBRC 14792 / USDA 110).